A 189-amino-acid polypeptide reads, in one-letter code: Ribosome maturation factor RimM (189 aa).

The 80-residue stretch at 110-189 folds into the PRC barrel domain; that stretch reads DDEYYWKDLI…TVTVDWDPNF (80 aa).

Belongs to the RimM family. As to quaternary structure, binds ribosomal protein uS19.

Its subcellular location is the cytoplasm. Its function is as follows. An accessory protein needed during the final step in the assembly of 30S ribosomal subunit, possibly for assembly of the head region. Essential for efficient processing of 16S rRNA. May be needed both before and after RbfA during the maturation of 16S rRNA. It has affinity for free ribosomal 30S subunits but not for 70S ribosomes. The protein is Ribosome maturation factor RimM of Blochmanniella pennsylvanica (strain BPEN).